The following is a 229-amino-acid chain: Ribonuclease 3 (229 aa).

The RNase III domain maps to Leu5 to Asp127. Mg(2+) is bound at residue Glu40. Asp44 is a catalytic residue. Mg(2+) contacts are provided by Asp113 and Glu116. Glu116 is a catalytic residue. A DRBM domain is found at Asp154 to Val224.

The protein belongs to the ribonuclease III family. Homodimer. Mg(2+) serves as cofactor.

Its subcellular location is the cytoplasm. It catalyses the reaction Endonucleolytic cleavage to 5'-phosphomonoester.. Digests double-stranded RNA. Involved in the processing of primary rRNA transcript to yield the immediate precursors to the large and small rRNAs (23S and 16S). Processes some mRNAs, and tRNAs when they are encoded in the rRNA operon. Processes pre-crRNA and tracrRNA of type II CRISPR loci if present in the organism. The sequence is that of Ribonuclease 3 from Pseudomonas putida (strain ATCC 700007 / DSM 6899 / JCM 31910 / BCRC 17059 / LMG 24140 / F1).